Consider the following 403-residue polypeptide: Na(+)/H(+) antiporter NhaA (403 aa).

12 helical membrane passes run 25–45 (IAGL…NSPF), 70–90 (LILW…GLEI), 105–125 (IALP…IFLA), 136–156 (GWAV…AMLG), 165–185 (VFLT…IALA), 188–208 (EGLS…LIVL), 213–233 (VASL…VLES), 234–254 (GVHS…RVSG), 269–289 (VALL…LGGV), 302–322 (IILG…GLAV), 340–360 (GAAL…GLAF), and 369–389 (VNLA…VVLA).

It belongs to the NhaA Na(+)/H(+) (TC 2.A.33) antiporter family.

Its subcellular location is the cell inner membrane. The catalysed reaction is Na(+)(in) + 2 H(+)(out) = Na(+)(out) + 2 H(+)(in). Functionally, na(+)/H(+) antiporter that extrudes sodium in exchange for external protons. The polypeptide is Na(+)/H(+) antiporter NhaA (Maricaulis maris (strain MCS10) (Caulobacter maris)).